Consider the following 117-residue polypeptide: Phosphoribosyl-ATP pyrophosphatase (117 aa).

Over residues 96–105 (GVSGIEEKLS) the composition is skewed to basic and acidic residues. The interval 96 to 117 (GVSGIEEKLSRSQNQPEPTKAE) is disordered. Residues 106-117 (RSQNQPEPTKAE) show a composition bias toward polar residues.

This sequence belongs to the PRA-PH family.

It localises to the cytoplasm. It carries out the reaction 1-(5-phospho-beta-D-ribosyl)-ATP + H2O = 1-(5-phospho-beta-D-ribosyl)-5'-AMP + diphosphate + H(+). It functions in the pathway amino-acid biosynthesis; L-histidine biosynthesis; L-histidine from 5-phospho-alpha-D-ribose 1-diphosphate: step 2/9. The protein is Phosphoribosyl-ATP pyrophosphatase of Nitrosomonas eutropha (strain DSM 101675 / C91 / Nm57).